We begin with the raw amino-acid sequence, 615 residues long: ABC transporter G family member 22 (615 aa).

In terms of domain architecture, ABC transporter spans 31–279; that stretch reads ITFKDLAYSV…EIGFPFPDQT (249 aa). 67-74 is a binding site for ATP; it reads GPSGSGKT. The ABC transmembrane type-2 domain occupies 364 to 610; it reads SNCLVRFAVA…TMVFLCLHYF (247 aa). 6 helical membrane-spanning segments follow: residues 370–390, 400–420, 442–462, 477–497, 508–528, and 587–607; these read FAVA…LGMD, VLFY…SLFI, LALM…LGTI, FFAM…MLII, FAVG…FVPI, and INLI…FLCL.

It belongs to the ABC transporter superfamily. ABCG family. Eye pigment precursor importer (TC 3.A.1.204) subfamily.

Its subcellular location is the membrane. In terms of biological role, may be involved in cell migration. The polypeptide is ABC transporter G family member 22 (abcG22) (Dictyostelium discoideum (Social amoeba)).